Consider the following 220-residue polypeptide: Acetate CoA-transferase subunit alpha (220 aa).

Position 24 to 30 (24 to 30 (GGFMGIG)) interacts with CoA.

It belongs to the 3-oxoacid CoA-transferase subunit A family. In terms of assembly, heterotetramer composed of two alpha subunits (AtoD) and two beta subunits (AtoA).

The protein resides in the cytoplasm. The enzyme catalyses an acyl-CoA + acetate = a carboxylate + acetyl-CoA. It catalyses the reaction acetoacetate + acetyl-CoA = acetoacetyl-CoA + acetate. It carries out the reaction butanoate + acetyl-CoA = butanoyl-CoA + acetate. The catalysed reaction is acetoacetate + butanoyl-CoA = acetoacetyl-CoA + butanoate. It functions in the pathway lipid metabolism; short-chain fatty acid metabolism. Inhibited by p-chloromercuribenzoate. Coenzyme A transferase which is involved in short-chain fatty acid degradation and catalyzes the activation of short-chain fatty acids to their respective CoA thiolesters. During acetoacetate degradation, catalyzes the transfer of CoA from acetyl-CoA to acetoacetate by a mechanism involving a covalent enzyme-CoA compound as a reaction intermediate. Utilizes a variety of short chain acyl-CoA and carboxylic acid substrates but exhibits maximal activity with normal and 3-keto substrates. This Escherichia coli (strain K12) protein is Acetate CoA-transferase subunit alpha.